We begin with the raw amino-acid sequence, 542 residues long: Cytochrome P450 monooxygenase sdnH (542 aa).

The helical transmembrane segment at 25-45 (LYVAGGILGAFTVYSIILVVY) threads the bilayer. The interval 141-160 (IIPPRGLGQEDSIGSTRSHD) is disordered. A helical transmembrane segment spans residues 340-360 (FMGAGTYPTAATLIFVAYYIL). Cysteine 483 provides a ligand contact to heme. Asparagine 506 is a glycosylation site (N-linked (GlcNAc...) asparagine).

It belongs to the cytochrome P450 family. Heme is required as a cofactor.

The protein resides in the membrane. It functions in the pathway antibiotic biosynthesis. Its function is as follows. Cytochrome P450 monooxygenase; part of the gene cluster that mediates the biosynthesis of sordarin and hypoxysordarin, glycoside antibiotics with a unique tetracyclic diterpene aglycone structure. First, the geranylgeranyl diphosphate synthase sdnC constructs GGDP from farnesyl diphosphate and isopentenyl diphosphate. The diterpene cyclase sdnA then catalyzes the cyclization of GGDP to afford cycloaraneosene. Cycloaraneosene is then hydroxylated four times by the putative cytochrome P450 monooxygenases sdnB, sdnE, sdnF and sdnH to give a hydroxylated cycloaraneosene derivative such as cycloaraneosene-8,9,13,19-tetraol. Although the order of the hydroxylations is unclear, at least C8, C9 and C13 of the cycloaraneosene skeleton are hydroxylated before the sordaricin formation. Dehydration of the 13-hydroxy group of the hydroxylated cycloaraneosene derivative might be catalyzed by an unassigned hypothetical protein such as sdnG and sdnP to construct the cyclopentadiene moiety. The FAD-dependent oxidoreductase sdnN is proposed to catalyze the oxidation at C9 of the hydroxylated cycloaraneosene derivative and also catalyze the Baeyer-Villiger oxidation to give the lactone intermediate. The presumed lactone intermediate would be hydrolyzed to give an acrolein moiety and a carboxylate moiety. Then, [4+2]cycloaddition would occur between the acrolein moiety and the cyclopentadiene moiety to give sordaricin. SdnN might also be involved in the [4+2]cycloaddition after the hypothesized oxidation to accommodate the oxidized product and prompt the [4+2]cycloaddition. GDP-6-deoxy-D-altrose may be biosynthesized from GDP-D-mannose by the putative GDP-mannose-4,6-dehydratase sdnI and the short-chain dehydrogenase sdnK. The glycosyltransferase sdnJ catalyzes the attachment of 6-deoxy-D-altrose onto the 19-hydroxy group of sordaricin to give 4'-O-demethylsordarin. The methyltransferase sdnD would complete the biosynthesis of sordarin. Sordarin can be further modified into hypoxysordarin. The unique acyl chain at the 3'-hydroxy group of hypoxysordarin would be constructed by an iterative type I PKS sdnO and the trans-acting polyketide methyltransferase sdnL. SdnL would be responsible for the introduction of an alpha-methyl group of the polyketide chain. Alternatively, the beta-lactamase-like protein sdnR might be responsible for the cleavage and transfer of the polyketide chain from the PKS sdnO to sordarin. Two putative cytochrome P450 monooxygenases, sdnQ and sdnT, might catalyze the epoxidations of the polyketide chain to complete the biosynthesis of hypoxysordarin. Transcriptional regulators sdnM and sdnS are presumably encoded for the transcriptional regulation of the expression of the sdn gene cluster. This Sordaria araneosa (Pleurage araneosa) protein is Cytochrome P450 monooxygenase sdnH.